A 495-amino-acid polypeptide reads, in one-letter code: Zinc finger and SCAN domain-containing protein 5B (495 aa).

A disordered region spans residues 1–40 (MAANWTLSWGQGGPCNSPGSDTPRSVASPETQLGNHDRNP). Polar residues predominate over residues 17–34 (SPGSDTPRSVASPETQLG). The 83-residue stretch at 44–126 (HMNFRMFSCP…DLLRNNRRPK (83 aa)) folds into the SCAN box domain. Disordered regions lie at residues 150–183 (APAS…RREQ) and 227–347 (ENRE…PDGQ). Residues 161-173 (VSSQWASSVNQMH) show a composition bias toward polar residues. Over residues 250-262 (RAKEGKEPQKRAS) the composition is skewed to basic and acidic residues. Polar residues predominate over residues 292–310 (NLSSPKRSKPDASSISQEE). 5 consecutive C2H2-type zinc fingers follow at residues 355–377 (FACD…RRSH), 383–405 (FQCD…QRVH), 411–433 (YMCD…KRIH), 439–461 (FKCK…QRTH), and 467–489 (YKCP…LKTH).

The protein localises to the nucleus. May be involved in transcriptional regulation. The protein is Zinc finger and SCAN domain-containing protein 5B (ZSCAN5B) of Homo sapiens (Human).